Consider the following 138-residue polypeptide: Large ribosomal subunit protein bL19 (138 aa).

This sequence belongs to the bacterial ribosomal protein bL19 family.

Its function is as follows. This protein is located at the 30S-50S ribosomal subunit interface and may play a role in the structure and function of the aminoacyl-tRNA binding site. The protein is Large ribosomal subunit protein bL19 of Rickettsia akari (strain Hartford).